The following is a 241-amino-acid chain: Glucosamine-6-phosphate deaminase (241 aa).

Asp-67 acts as the Proton acceptor; for enolization step in catalysis. Asn-136 acts as the For ring-opening step in catalysis. The active-site Proton acceptor; for ring-opening step is the His-138. Glu-143 functions as the For ring-opening step in the catalytic mechanism.

Belongs to the glucosamine/galactosamine-6-phosphate isomerase family. NagB subfamily.

It catalyses the reaction alpha-D-glucosamine 6-phosphate + H2O = beta-D-fructose 6-phosphate + NH4(+). The protein operates within amino-sugar metabolism; N-acetylneuraminate degradation; D-fructose 6-phosphate from N-acetylneuraminate: step 5/5. In terms of biological role, catalyzes the reversible isomerization-deamination of glucosamine 6-phosphate (GlcN6P) to form fructose 6-phosphate (Fru6P) and ammonium ion. This Bacillus velezensis (strain DSM 23117 / BGSC 10A6 / LMG 26770 / FZB42) (Bacillus amyloliquefaciens subsp. plantarum) protein is Glucosamine-6-phosphate deaminase.